A 72-amino-acid chain; its full sequence is Translation initiation factor IF-1 (72 aa).

An S1-like domain is found at 1–72 (MPKEEVLEFP…TKGRITYRFK (72 aa)).

The protein belongs to the IF-1 family. In terms of assembly, component of the 30S ribosomal translation pre-initiation complex which assembles on the 30S ribosome in the order IF-2 and IF-3, IF-1 and N-formylmethionyl-tRNA(fMet); mRNA recruitment can occur at any time during PIC assembly.

The protein localises to the cytoplasm. In terms of biological role, one of the essential components for the initiation of protein synthesis. Stabilizes the binding of IF-2 and IF-3 on the 30S subunit to which N-formylmethionyl-tRNA(fMet) subsequently binds. Helps modulate mRNA selection, yielding the 30S pre-initiation complex (PIC). Upon addition of the 50S ribosomal subunit IF-1, IF-2 and IF-3 are released leaving the mature 70S translation initiation complex. This is Translation initiation factor IF-1 from Rhizobium etli (strain ATCC 51251 / DSM 11541 / JCM 21823 / NBRC 15573 / CFN 42).